The following is a 363-amino-acid chain: Aminomethyltransferase (363 aa).

Belongs to the GcvT family. In terms of assembly, the glycine cleavage system is composed of four proteins: P, T, L and H.

It carries out the reaction N(6)-[(R)-S(8)-aminomethyldihydrolipoyl]-L-lysyl-[protein] + (6S)-5,6,7,8-tetrahydrofolate = N(6)-[(R)-dihydrolipoyl]-L-lysyl-[protein] + (6R)-5,10-methylene-5,6,7,8-tetrahydrofolate + NH4(+). The glycine cleavage system catalyzes the degradation of glycine. This chain is Aminomethyltransferase, found in Staphylococcus aureus (strain N315).